A 91-amino-acid polypeptide reads, in one-letter code: Pyruvate kinase (91 aa).

Position 48 (Arg48) interacts with substrate. Residues Asn50, Ser52, Asp82, and Thr83 each contribute to the K(+) site. 50–53 (NFSH) is a binding site for ATP. Arg89 serves as a coordination point for ATP.

Belongs to the pyruvate kinase family. Homotetramer. Mg(2+) is required as a cofactor. The cofactor is K(+).

It catalyses the reaction pyruvate + ATP = phosphoenolpyruvate + ADP + H(+). The protein operates within carbohydrate degradation; glycolysis; pyruvate from D-glyceraldehyde 3-phosphate: step 5/5. The polypeptide is Pyruvate kinase (Leishmania braziliensis).